The chain runs to 340 residues: Quinic acid degradation cluster protein x (340 aa).

Residues Glu90, Asp115, Leu117, Asp118, and Asp262 each contribute to the Mg(2+) site. Glu90 is a substrate binding site. Substrate contacts are provided by residues 117 to 120 and Asp262; that span reads LDGT.

Belongs to the inositol monophosphatase superfamily.

Functionally, part of the qa gene cluster that mediates the catabolism of quinic acid (QA) and as such, allows the use of QA as a sole carbon source. Its function within the pathway has not been determined yet but it probably plays a regulatory role. The qa cluster encodes 3 inducible enymes (qa-2, qa-3 and qa-4) catalyzing the first three reactions in the catabolism of quinic acid to protocatechuic acid (also known as 3,4-Dihydroxybenzoic acid). This chain is Quinic acid degradation cluster protein x, found in Neurospora crassa (strain ATCC 24698 / 74-OR23-1A / CBS 708.71 / DSM 1257 / FGSC 987).